Consider the following 328-residue polypeptide: Phenylalanine--tRNA ligase alpha subunit (328 aa).

Glu-245 contacts Mg(2+).

The protein belongs to the class-II aminoacyl-tRNA synthetase family. Phe-tRNA synthetase alpha subunit type 1 subfamily. Tetramer of two alpha and two beta subunits. The cofactor is Mg(2+).

The protein resides in the cytoplasm. It carries out the reaction tRNA(Phe) + L-phenylalanine + ATP = L-phenylalanyl-tRNA(Phe) + AMP + diphosphate + H(+). The protein is Phenylalanine--tRNA ligase alpha subunit (pheS) of Helicobacter pylori (strain ATCC 700392 / 26695) (Campylobacter pylori).